We begin with the raw amino-acid sequence, 139 residues long: Large ribosomal subunit protein bL17 (139 aa).

Residues 120-139 (ESAKGQDSGPVHVEGDEEAA) are disordered.

It belongs to the bacterial ribosomal protein bL17 family. In terms of assembly, part of the 50S ribosomal subunit. Contacts protein L32.

This chain is Large ribosomal subunit protein bL17, found in Parvibaculum lavamentivorans (strain DS-1 / DSM 13023 / NCIMB 13966).